Reading from the N-terminus, the 344-residue chain is Probable dual-specificity RNA methyltransferase RlmN (344 aa).

The active-site Proton acceptor is the E83. The 235-residue stretch at 89–323 folds into the Radical SAM core domain; the sequence is YLDRKTICVS…VSVRRSRGKD (235 aa). C96 and C328 are oxidised to a cystine. Positions 103, 107, and 110 each coordinate [4Fe-4S] cluster. S-adenosyl-L-methionine is bound by residues 153-154, S185, 209-211, and N285; these read GE and SLH. C328 (S-methylcysteine intermediate) is an active-site residue.

This sequence belongs to the radical SAM superfamily. RlmN family. Requires [4Fe-4S] cluster as cofactor.

It localises to the cytoplasm. It carries out the reaction adenosine(2503) in 23S rRNA + 2 reduced [2Fe-2S]-[ferredoxin] + 2 S-adenosyl-L-methionine = 2-methyladenosine(2503) in 23S rRNA + 5'-deoxyadenosine + L-methionine + 2 oxidized [2Fe-2S]-[ferredoxin] + S-adenosyl-L-homocysteine. It catalyses the reaction adenosine(37) in tRNA + 2 reduced [2Fe-2S]-[ferredoxin] + 2 S-adenosyl-L-methionine = 2-methyladenosine(37) in tRNA + 5'-deoxyadenosine + L-methionine + 2 oxidized [2Fe-2S]-[ferredoxin] + S-adenosyl-L-homocysteine. Its function is as follows. Specifically methylates position 2 of adenine 2503 in 23S rRNA and position 2 of adenine 37 in tRNAs. The sequence is that of Probable dual-specificity RNA methyltransferase RlmN from Deinococcus geothermalis (strain DSM 11300 / CIP 105573 / AG-3a).